The following is a 215-amino-acid chain: Adenylate kinase (215 aa).

10–15 (GAGKGT) is an ATP binding site. The segment at 30–59 (STGDILRENVKNQTELGKKAKEYMDKGLLV) is NMP. AMP contacts are provided by residues T31, R36, 57-59 (LLV), 85-88 (GFPR), and Q92. The tract at residues 126–163 (GRRICKSCGASFHVVYRPPKKEGICDICGGQLYQREDD) is LID. ATP is bound at residue R127. Positions 130 and 133 each coordinate Zn(2+). Residue 136–137 (SF) coordinates ATP. C150 and C153 together coordinate Zn(2+). Residues R160 and R171 each contribute to the AMP site. An ATP-binding site is contributed by E199.

It belongs to the adenylate kinase family. As to quaternary structure, monomer.

The protein resides in the cytoplasm. The enzyme catalyses AMP + ATP = 2 ADP. It functions in the pathway purine metabolism; AMP biosynthesis via salvage pathway; AMP from ADP: step 1/1. Its function is as follows. Catalyzes the reversible transfer of the terminal phosphate group between ATP and AMP. Plays an important role in cellular energy homeostasis and in adenine nucleotide metabolism. This Caldicellulosiruptor saccharolyticus (strain ATCC 43494 / DSM 8903 / Tp8T 6331) protein is Adenylate kinase.